The sequence spans 208 residues: Thymidylate kinase (208 aa).

7 to 14 (GIDGAGKT) is a binding site for ATP.

The protein belongs to the thymidylate kinase family.

The enzyme catalyses dTMP + ATP = dTDP + ADP. Phosphorylation of dTMP to form dTDP in both de novo and salvage pathways of dTTP synthesis. The polypeptide is Thymidylate kinase (Xylella fastidiosa (strain Temecula1 / ATCC 700964)).